The chain runs to 89 residues: Large ribosomal subunit protein bL28 (89 aa).

Belongs to the bacterial ribosomal protein bL28 family.

The polypeptide is Large ribosomal subunit protein bL28 (Chlamydia caviae (strain ATCC VR-813 / DSM 19441 / 03DC25 / GPIC) (Chlamydophila caviae)).